The primary structure comprises 520 residues: Peptidoglycan-recognition protein LC (520 aa).

2 stretches are compositionally biased toward polar residues: residues 1–14 (MPFS…QCSN) and 27–36 (KNCSTSSTDS). Disordered stretches follow at residues 1–78 (MPFS…RISV) and 239–278 (DKWK…AQTP). Over 1-291 (MPFSNETEMS…PFLPNTVGRK (291 aa)) the chain is Cytoplasmic. 2 stretches are compositionally biased toward basic and acidic residues: residues 48-58 (RPEKETKDRGT) and 66-78 (KSEE…RISV). A helical; Signal-anchor for type II membrane protein transmembrane segment spans residues 292–312 (AVTVTVVFVTLTFLLGIVLAT). Topologically, residues 313-520 (TTNLFGKTLN…ASFANWTHWS (208 aa)) are extracellular. The N-linked (GlcNAc...) asparagine glycan is linked to Asn-389. A disulfide bridge links Cys-390 with Cys-396. One can recognise an N-acetylmuramoyl-L-alanine amidase domain in the interval 412-490 (QKCDIAYNFL…KLGKIAPSYR (79 aa)). The N-linked (GlcNAc...) asparagine glycan is linked to Asn-515.

Belongs to the N-acetylmuramoyl-L-alanine amidase 2 family. In terms of processing, proteolytically cleaved, probably by a metaloprotease such as Mmp2; proteolytic cleavage leads to activation of the imd/Relish signaling pathway. As to expression, expressed in the fat body and hemocytes.

The protein resides in the membrane. Its activity is regulated as follows. Activated by proteolytic cleavage in response to Gram-negative bacterial infection; cleavage may be mediated by endogenous proteases, such as the metalloprotease Mmp2 or elastase, or by bacterially expressed proteases such as the surface serine protease OmpT. Major activator of the imd/Relish pathway and is likely to encode a pattern recognition molecule for the humoral immune response. Required for Relish processing and nuclear translocation following proteolytic cleavage. Involved in the response to lipopolysaccharide (LPS) and peptidoglycan of Gram-negative bacteria. The different isoforms probably display different recognition capabilities to various microbial patterns. Its function is as follows. Mediates the response to LPS and Gram-negative bacteria. Functionally, mediates the response to LPS, peptidoglycan and Gram-negative bacteria. The protein is Peptidoglycan-recognition protein LC (PGRP-LC) of Drosophila melanogaster (Fruit fly).